Reading from the N-terminus, the 470-residue chain is Magnesium transporter MRS2, mitochondrial (470 aa).

Residues 1 to 32 constitute a mitochondrion transit peptide; sequence MNRRLLVRSISCFQPLSRITFGRPNTPFLRKY. Over 33–314 the chain is Mitochondrial matrix; that stretch reads ADTSTAANTN…RNSLMLLELK (282 aa). The chain crosses the membrane as a helical span at residues 315–333; sequence VTIYTLGFTVASVLPAFYG. Residues 332 to 335 carry the YGMN motif; that stretch reads YGMN. Residues 334-344 are Mitochondrial intermembrane-facing; it reads MNLKNFIEESE. Residues 345–361 traverse the membrane as a helical segment; sequence WGFTSVAVFSIVSALYI. The Mitochondrial matrix segment spans residues 362-470; it reads TKKNFNSLRS…WKWLIEDKKN (109 aa).

The protein belongs to the CorA metal ion transporter (MIT) (TC 1.A.35) family. Homopentamer. Forms homooligomers. Interacts with MFM1.

The protein resides in the mitochondrion inner membrane. In terms of biological role, high-conductance magnesium-selective channel that mediates the influx of magnesium into the mitochondrial matrix. Essential for the splicing of mRNA group II introns in mitochondria by affecting mitochondrial magnesium concentrations, which are critical for group II intron splicing. It also suppresses a variety of mitochondrial intron mutations and its absence may disturb the assembly of mitochondrial membrane complexes. The protein is Magnesium transporter MRS2, mitochondrial (MRS2) of Saccharomyces cerevisiae (strain ATCC 204508 / S288c) (Baker's yeast).